We begin with the raw amino-acid sequence, 3411 residues long: Genome polyprotein (3411 aa).

Topologically, residues 1-104 are cytoplasmic; it reads MSGRKAQGKT…LSSRKRRSHD (104 aa). Positions 38-72 are hydrophobic; homodimerization of capsid protein C; sequence PGPSRGVQGFIFFFLFNILTGKKITAQLKRLWKML. Residues 102 to 121 constitute a propeptide, ER anchor for the capsid protein C, removed in mature form by serine protease NS3; that stretch reads SHDVLTVQFLILGMLLMTGG. A helical transmembrane segment spans residues 105–125; sequence VLTVQFLILGMLLMTGGVTLM. Topologically, residues 126-244 are extracellular; the sequence is RKNRWLLLNV…GERQLQKIER (119 aa). 2 N-linked (GlcNAc...) asparagine; by host glycosylation sites follow: Asn-134 and Asn-150. A helical membrane pass occupies residues 245–265; that stretch reads WFVRNPFFAVTALTIAYLVGS. Topologically, residues 266 to 270 are cytoplasmic; sequence NMTQR. A helical membrane pass occupies residues 271-285; the sequence is VVIALLVLAVGPAYS. Residues 286 to 730 lie on the Extracellular side of the membrane; it reads AHCIGVADRD…TVFGSAFQGL (445 aa). 8 cysteine pairs are disulfide-bonded: Cys-288–Cys-315, Cys-345–Cys-401, Cys-345–Cys-406, Cys-359–Cys-390, Cys-377–Cys-401, Cys-377–Cys-406, Cys-467–Cys-568, and Cys-585–Cys-615. The tract at residues 383–396 is fusion peptide; the sequence is DRGWGNGCGLFGKG. Residues 731 to 751 traverse the membrane as a helical segment; it reads FGGLNWITKVIMGAVLIWVGF. Residues 752–757 lie on the Cytoplasmic side of the membrane; it reads NTRNMT. A helical membrane pass occupies residues 758–778; that stretch reads MSMSMILVGVIMMFLSLGVGA. The Extracellular segment spans residues 779–1132; it reads DQGCAINFGK…LVRSWVTAGE (354 aa). Intrachain disulfides connect Cys-782-Cys-793, Cys-833-Cys-921, Cys-957-Cys-1002, Cys-1058-Cys-1107, Cys-1069-Cys-1091, and Cys-1090-Cys-1094. Asn-908 and Asn-986 each carry an N-linked (GlcNAc...) asparagine; by host glycan. The helical transmembrane segment at 1133 to 1153 threads the bilayer; sequence IHAVPFGLVSMMIAMEVVLRK. Topologically, residues 1154-1201 are cytoplasmic; sequence RQGPKQVLVGGVVLLGAMLVGQVTLLDLLELTVAVGLHFHEMNNGGDA. Residues 1202–1222 form a helical membrane-spanning segment; that stretch reads MYMALIAAFSVRPGLLIGFGL. Over 1223–1287 the chain is Lumenal; it reads RTLWSPRERL…ILPLMALLTP (65 aa). A helical transmembrane segment spans residues 1288-1308; sequence VTMAEVRLATMLFCTVVIIGV. The Cytoplasmic segment spans residues 1309 to 1355; sequence LHQNSKDTSMQKTIPLVALTLTSYLGLTQPFLGLCAFLATRIFGRRS. Residues 1356 to 1376 traverse the membrane as a helical segment; sequence IPVNEALAATGLVGVLAGLAF. At 1377 to 1378 the chain is on the lumenal side; it reads QE. The chain crosses the membrane as a helical span at residues 1379–1399; it reads MENFLGPIAVGGILMMLVSVA. At 1400-1456 the chain is on the cytoplasmic side; the sequence is GRVDGLELKKLGEVSWEEEAEISGSSARYDVALSEQGEFKLLSEEKVPWDQVVMTSL. The interacts with and activates NS3 protease stretch occupies residues 1407 to 1446; it reads LKKLGEVSWEEEAEISGSSARYDVALSEQGEFKLLSEEKV. The helical intramembrane region spans 1457 to 1477; the sequence is ALVGAAIHPFALLLVLAGWLF. The Cytoplasmic portion of the chain corresponds to 1478–2157; the sequence is HVRRARRSGD…RNALSMMPEA (680 aa). Positions 1485-1665 constitute a Peptidase S7 domain; it reads SGDVLWDIPT…EVKEEGKEEL (181 aa). Active-site charge relay system; for serine protease NS3 activity residues include His-1537, Asp-1561, and Ser-1622. A Helicase ATP-binding domain is found at 1669–1825; it reads PTMLKKGKTT…HSNGEIEDVQ (157 aa). Positions 1673–1676 are important for RNA-binding; that stretch reads KKGK. Residue 1682–1689 participates in ATP binding; the sequence is FHPGAGKT. A DEAH box motif is present at residues 1773-1776; it reads DEAH. The 178-residue stretch at 1820-1997 folds into the Helicase C-terminal domain; that stretch reads EIEDVQTDIP…VRGGMVAPLY (178 aa). At Lys-1877 the chain carries N6-acetyllysine; by host. Residues 1942–1961 form a disordered region; sequence AAQRRGRIGRNPNRDGDSYY. Residues 2158 to 2178 form a helical membrane-spanning segment; it reads MTIVMLFLLAGLLTSGMVIFF. Topologically, residues 2179–2186 are lumenal; the sequence is MSPKGISR. Positions 2187-2207 form an intramembrane region, helical; sequence MSMAKGTMAGCGYLMFLGGVE. The Lumenal portion of the chain corresponds to 2208–2209; sequence PT. Residues 2210-2230 traverse the membrane as a helical segment; the sequence is HISYIMLIFFVLMVVVIPEPG. At 2231-2241 the chain is on the cytoplasmic side; that stretch reads QQRSIQDNQVA. A helical membrane pass occupies residues 2242-2256; that stretch reads FLIIGILTLVSVVAA. Over 2257-2293 the chain is Lumenal; that stretch reads NELGMLEKTKEDLFGKKNLIPSGASPWSWPDLDLKPG. An intramembrane region (helical) is located at residues 2294–2314; that stretch reads AAWTVYVGIVTMLSPMLHHWI. Residues 2315–2360 are Lumenal-facing; sequence KVEYGNLSLSGIAQSASVLSFMDKGIPFMKMNISVIMLLVSGWNSI. The helical transmembrane segment at 2361–2380 threads the bilayer; that stretch reads TVMPLLCGIGCAMLHWSLIL. Topologically, residues 2381 to 2421 are cytoplasmic; the sequence is PGIKAQQSKLAQRRVFHGVAKNPVVDGNPTVDIEEAPEMPA. The chain crosses the membrane as a helical span at residues 2422 to 2442; sequence LYEKKLALYLLLALSLASVAM. The Lumenal segment spans residues 2443-2445; it reads CRT. The chain crosses the membrane as a helical span at residues 2446-2466; the sequence is PFSLDEGIVLASAALGPLIEG. At 2467-3411 the chain is on the cytoplasmic side; sequence NTSLLWNGPM…DADLQPGELI (945 aa). The mRNA cap 0-1 NS5-type MT domain maps to 2507-2771; the sequence is GTANGKTLGE…DVTLPIGTRS (265 aa). An S-adenosyl-L-methionine-binding site is contributed by Ser-2562. Position 2562 is a phosphoserine (Ser-2562). The active-site For 2'-O-MTase activity is Lys-2567. S-adenosyl-L-methionine-binding residues include Gly-2592, Trp-2593, Thr-2610, Leu-2611, Asp-2637, and Val-2638. Asp-2652 (for 2'-O-MTase activity) is an active-site residue. An S-adenosyl-L-methionine-binding site is contributed by Ile-2653. Catalysis depends on for 2'-O-MTase activity residues Lys-2688 and Glu-2724. S-adenosyl-L-methionine is bound at residue Tyr-2726. A Nuclear localization signal motif is present at residues 2878-2911; the sequence is RKIMKVVNRWLFRHLAREKNPRLCTKEEFIAKVR. Zn(2+)-binding residues include Glu-2945, His-2949, Cys-2954, and Cys-2957. One can recognise a RdRp catalytic domain in the interval 3035 to 3187; the sequence is GGLYADDTAG…RPIDDRFGLA (153 aa). His-3222, Cys-3238, and Cys-3357 together coordinate Zn(2+).

In the N-terminal section; belongs to the class I-like SAM-binding methyltransferase superfamily. mRNA cap 0-1 NS5-type methyltransferase family. Homodimer. Interacts (via N-terminus) with host EXOC1 (via C-terminus); this interaction results in EXOC1 degradation through the proteasome degradation pathway. In terms of assembly, forms heterodimers with envelope protein E in the endoplasmic reticulum and Golgi. As to quaternary structure, homodimer; in the endoplasmic reticulum and Golgi. Interacts with protein prM. Interacts with non-structural protein 1. Homodimer; Homohexamer when secreted. Interacts with envelope protein E. In terms of assembly, interacts (via N-terminus) with serine protease NS3. As to quaternary structure, forms a heterodimer with serine protease NS3. May form homooligomers. Forms a heterodimer with NS2B. Interacts with non-structural protein 2A (via N-terminus). Interacts with NS4B. Interacts with unphosphorylated RNA-directed RNA polymerase NS5; this interaction stimulates RNA-directed RNA polymerase NS5 guanylyltransferase activity. NS3 interacts with host PDCD6IP; this interaction contributes to virion release. In terms of assembly, interacts with serine protease NS3. As to quaternary structure, homodimer. Interacts with host STAT2; this interaction prevents the establishment of cellular antiviral state. Interacts with serine protease NS3. Interacts with host TRIM23; this interaction leads to NS5 ubiquitination. Post-translationally, specific enzymatic cleavages in vivo yield mature proteins. The nascent capsid protein C contains a C-terminal hydrophobic domain that act as a signal sequence for translocation of prM into the lumen of the ER. Mature capsid protein C is cleaved at a site upstream of this hydrophobic domain by NS3. prM is cleaved in post-Golgi vesicles by a host furin, releasing the mature small envelope protein M, and peptide pr. Non-structural protein 2A-alpha, a C-terminally truncated form of non-structural protein 2A, results from partial cleavage by NS3. Specific enzymatic cleavages in vivo yield mature proteins peptide 2K acts as a signal sequence and is removed from the N-terminus of NS4B by the host signal peptidase in the ER lumen. Signal cleavage at the 2K-4B site requires a prior NS3 protease-mediated cleavage at the 4A-2K site. In terms of processing, cleaved in post-Golgi vesicles by a host furin, releasing the mature small envelope protein M, and peptide pr. This cleavage is incomplete as up to 30% of viral particles still carry uncleaved prM. N-glycosylated. Post-translationally, N-glycosylated. The excreted form is glycosylated and this is required for efficient secretion of the protein from infected cells. In terms of processing, polyubiquitinated; ubiquitination is probably mediated by host TRIM23 and is prerequisite for NS5-STAT2 interaction. NS5 is not ISGylated or sumoylated. Acetylated by host KAT5. Acetylation modulates NS3 RNA-binding and unwinding activities and plays an important positive role for viral replication. Post-translationally, phosphorylated on serines residues. This phosphorylation may trigger NS5 nuclear localization.

It is found in the virion. The protein resides in the host nucleus. The protein localises to the host cytoplasm. It localises to the host perinuclear region. Its subcellular location is the secreted. It is found in the virion membrane. The protein resides in the host endoplasmic reticulum membrane. The catalysed reaction is Selective hydrolysis of -Xaa-Xaa-|-Yaa- bonds in which each of the Xaa can be either Arg or Lys and Yaa can be either Ser or Ala.. It catalyses the reaction RNA(n) + a ribonucleoside 5'-triphosphate = RNA(n+1) + diphosphate. The enzyme catalyses a ribonucleoside 5'-triphosphate + H2O = a ribonucleoside 5'-diphosphate + phosphate + H(+). It carries out the reaction ATP + H2O = ADP + phosphate + H(+). The catalysed reaction is a 5'-end (5'-triphosphoguanosine)-ribonucleoside in mRNA + S-adenosyl-L-methionine = a 5'-end (N(7)-methyl 5'-triphosphoguanosine)-ribonucleoside in mRNA + S-adenosyl-L-homocysteine. It catalyses the reaction a 5'-end (N(7)-methyl 5'-triphosphoguanosine)-ribonucleoside in mRNA + S-adenosyl-L-methionine = a 5'-end (N(7)-methyl 5'-triphosphoguanosine)-(2'-O-methyl-ribonucleoside) in mRNA + S-adenosyl-L-homocysteine + H(+). Its function is as follows. Plays a role in virus budding by binding to the cell membrane and gathering the viral RNA into a nucleocapsid that forms the core of a mature virus particle. During virus entry, may induce genome penetration into the host cytoplasm after hemifusion induced by the surface proteins. Can migrate to the cell nucleus where it modulates host functions. Inhibits RNA silencing by interfering with host Dicer. Functionally, prevents premature fusion activity of envelope proteins in trans-Golgi by binding to envelope protein E at pH6.0. After virion release in extracellular space, gets dissociated from E dimers. In terms of biological role, acts as a chaperone for envelope protein E during intracellular virion assembly by masking and inactivating envelope protein E fusion peptide. prM is the only viral peptide matured by host furin in the trans-Golgi network probably to avoid catastrophic activation of the viral fusion activity in acidic Golgi compartment prior to virion release. prM-E cleavage is inefficient, and many virions are only partially matured. These uncleaved prM would play a role in immune evasion. Its function is as follows. May play a role in virus budding. Exerts cytotoxic effects by activating a mitochondrial apoptotic pathway through M ectodomain. May display a viroporin activity. Binds to host cell surface receptor and mediates fusion between viral and cellular membranes. Envelope protein is synthesized in the endoplasmic reticulum in the form of heterodimer with protein prM. They play a role in virion budding in the ER, and the newly formed immature particle is covered with 60 spikes composed of heterodimer between precursor prM and envelope protein E. The virion is transported to the Golgi apparatus where the low pH causes dissociation of PrM-E heterodimers and formation of E homodimers. prM-E cleavage is inefficient, and many virions are only partially matured. These uncleaved prM would play a role in immune evasion. Functionally, involved in immune evasion, pathogenesis and viral replication. Once cleaved off the polyprotein, is targeted to three destinations: the viral replication cycle, the plasma membrane and the extracellular compartment. Essential for viral replication. Required for formation of the replication complex and recruitment of other non-structural proteins to the ER-derived membrane structures. Excreted as a hexameric lipoparticle that plays a role against host immune response. Antagonizing the complement function. Binds to the host macrophages and dendritic cells. Inhibits signal transduction originating from Toll-like receptor 3 (TLR3). In terms of biological role, component of the viral RNA replication complex that functions in virion assembly and antagonizes the host immune response. Its function is as follows. Required cofactor for the serine protease function of NS3. May have membrane-destabilizing activity and form viroporins. Displays three enzymatic activities: serine protease, NTPase and RNA helicase. NS3 serine protease, in association with NS2B, performs its autocleavage and cleaves the polyprotein at dibasic sites in the cytoplasm: C-prM, NS2A-NS2B, NS2B-NS3, NS3-NS4A, NS4A-2K and NS4B-NS5. NS3 RNA helicase binds RNA and unwinds dsRNA in the 3' to 5' direction. Also plays a role in virus assembly. Functionally, regulates the ATPase activity of the NS3 helicase activity. NS4A allows NS3 helicase to conserve energy during unwinding. In terms of biological role, functions as a signal peptide for NS4B and is required for the interferon antagonism activity of the latter. Its function is as follows. Induces the formation of ER-derived membrane vesicles where the viral replication takes place. Inhibits interferon (IFN)-induced host STAT1 phosphorylation and nuclear translocation, thereby preventing the establishment of cellular antiviral state by blocking the IFN-alpha/beta pathway. Replicates the viral (+) and (-) RNA genome, and performs the capping of genomes in the cytoplasm. NS5 methylates viral RNA cap at guanine N-7 and ribose 2'-O positions. Besides its role in RNA genome replication, also prevents the establishment of cellular antiviral state by blocking the interferon-alpha/beta (IFN-alpha/beta) signaling pathway. IFN-I induces binding of NS5 to host IFN-activated transcription factor STAT2, preventing its transcriptional activity. Host TRIM23 is the E3 ligase that interacts with and polyubiquitinates NS5 to promote its binding to STAT2 and trigger IFN-I signaling inhibition. In Aedes aegypti (Yellowfever mosquito), this protein is Genome polyprotein.